A 702-amino-acid polypeptide reads, in one-letter code: Polyribonucleotide nucleotidyltransferase 3 (702 aa).

Mg(2+)-binding residues include aspartate 483 and aspartate 489. The region spanning 550 to 609 (PKVTQIKVHPDKVREVIGAGGKVINKIIDETGCKITIENDGTIYVAAPDQESSRRAVEMI) is the KH domain. One can recognise an S1 motif domain in the interval 619 to 687 (GEVYTGKVIK…PQGKIGLSRK (69 aa)).

The protein belongs to the polyribonucleotide nucleotidyltransferase family. The cofactor is Mg(2+).

The protein resides in the cytoplasm. The enzyme catalyses RNA(n+1) + phosphate = RNA(n) + a ribonucleoside 5'-diphosphate. Functionally, involved in mRNA degradation. Catalyzes the phosphorolysis of single-stranded polyribonucleotides processively in the 3'- to 5'-direction. The sequence is that of Polyribonucleotide nucleotidyltransferase 3 from Alkaliphilus metalliredigens (strain QYMF).